The primary structure comprises 91 residues: Soluble cytochrome b558 (91 aa).

The 81-residue stretch at 8-88 folds into the Cytochrome b5 heme-binding domain; the sequence is LPVFTLEQVA…LQRYLIGTLE (81 aa). Cysteine 25 and cysteine 54 form a disulfide bridge. Histidine 43 and histidine 71 together coordinate heme.

This chain is Soluble cytochrome b558, found in Ectothiorhodospira shaposhnikovii (Ectothiorhodospira vacuolata).